The chain runs to 566 residues: Oxygen-dependent choline dehydrogenase (566 aa).

7–36 (DYIICGAGSAGNVLATRLTEDPNVTVLLLE) contacts FAD. Residues 183 to 203 (QQEGFGPMDRTVTPKGRRAST) are disordered. Histidine 474 acts as the Proton acceptor in catalysis.

This sequence belongs to the GMC oxidoreductase family. FAD is required as a cofactor.

The enzyme catalyses choline + A = betaine aldehyde + AH2. The catalysed reaction is betaine aldehyde + NAD(+) + H2O = glycine betaine + NADH + 2 H(+). It functions in the pathway amine and polyamine biosynthesis; betaine biosynthesis via choline pathway; betaine aldehyde from choline (cytochrome c reductase route): step 1/1. Involved in the biosynthesis of the osmoprotectant glycine betaine. Catalyzes the oxidation of choline to betaine aldehyde and betaine aldehyde to glycine betaine at the same rate. The chain is Oxygen-dependent choline dehydrogenase from Burkholderia ambifaria (strain ATCC BAA-244 / DSM 16087 / CCUG 44356 / LMG 19182 / AMMD) (Burkholderia cepacia (strain AMMD)).